Reading from the N-terminus, the 165-residue chain is Neurotrophin-3 (165 aa).

A signal peptide spans 1 to 3 (IQS). Residues 4–119 (TSMDQGSLSE…VLTXTSXXXR (116 aa)) constitute a propeptide that is removed on maturation.

The protein belongs to the NGF-beta family.

Its subcellular location is the secreted. In terms of biological role, seems to promote the survival of visceral and proprioceptive sensory neurons. The polypeptide is Neurotrophin-3 (NTF3) (Tropidophis haetianus (Haitian dwarf boa)).